The primary structure comprises 507 residues: Probable aldehyde dehydrogenase (507 aa).

NAD(+) is bound at residue 219–225 (GFGVEAG). Residues Glu263 and Cys302 contribute to the active site.

Belongs to the aldehyde dehydrogenase family.

It carries out the reaction an aldehyde + NAD(+) + H2O = a carboxylate + NADH + 2 H(+). The sequence is that of Probable aldehyde dehydrogenase from Streptomyces coelicolor (strain ATCC BAA-471 / A3(2) / M145).